We begin with the raw amino-acid sequence, 445 residues long: Probable fructoselysine/psicoselysine transporter FrlA (445 aa).

A run of 12 helical transmembrane segments spans residues 10-30, 38-58, 93-113, 121-141, 155-175, 181-201, 236-256, 273-293, 334-354, 355-375, 389-410, and 417-435; these read LGFW…GIFV, AAGT…IVIP, GWAS…LAIV, PIDP…FMLL, LITI…IFWF, AAPT…LAGI, CLLV…LMPF, IPAL…IVIL, IILQ…TSLL, GYFT…IIWC, AFGL…STFV, and LICA…AFWA.

It belongs to the amino acid-polyamine-organocation (APC) superfamily.

Its subcellular location is the cell inner membrane. The enzyme catalyses N(6)-(D-fructosyl)-L-lysine(in) = N(6)-(D-fructosyl)-L-lysine(out). The catalysed reaction is N(6)-(D-psicosyl)-L-lysine(in) = N(6)-(D-psicosyl)-L-lysine(out). Its pathway is carbohydrate metabolism; fructoselysine degradation. In terms of biological role, is likely involved in the transport of fructoselysine and psicoselysine to the cytoplasm, where they are degraded. This Escherichia coli (strain K12) protein is Probable fructoselysine/psicoselysine transporter FrlA.